The sequence spans 611 residues: tRNA uridine 5-carboxymethylaminomethyl modification enzyme MnmG (611 aa).

Position 14 to 19 (14 to 19) interacts with FAD; that stretch reads GAGHAG. Residue 274–288 coordinates NAD(+); sequence GPRYCPSIEDKIVKF.

This sequence belongs to the MnmG family. Homodimer. Heterotetramer of two MnmE and two MnmG subunits. It depends on FAD as a cofactor.

The protein resides in the cytoplasm. Functionally, NAD-binding protein involved in the addition of a carboxymethylaminomethyl (cmnm) group at the wobble position (U34) of certain tRNAs, forming tRNA-cmnm(5)s(2)U34. This Chlamydia abortus (strain DSM 27085 / S26/3) (Chlamydophila abortus) protein is tRNA uridine 5-carboxymethylaminomethyl modification enzyme MnmG.